Consider the following 93-residue polypeptide: Putative nuclease p44 (93 aa).

The VRR-NUC domain maps to 5–84; sequence REDSIEKHLV…HQVIVLDSQD (80 aa).

Mg(2+) is required as a cofactor.

Functionally, nuclease. In Escherichia coli (Bacteriophage APSE-1), this protein is Putative nuclease p44 (44).